Reading from the N-terminus, the 286-residue chain is Polyamine aminopropyltransferase (286 aa).

The 234-residue stretch at 5-238 (KIWHEKLHRH…GTMMFSWGTD (234 aa)) folds into the PABS domain. Residues histidine 64 and aspartate 88 each coordinate spermidine. S-methyl-5'-thioadenosine-binding positions include glutamate 108 and 140–141 (NG). Aspartate 158 acts as the Proton acceptor in catalysis. 158–161 (DSTD) contacts spermidine.

The protein belongs to the spermidine/spermine synthase family. In terms of assembly, homodimer or homotetramer.

The protein localises to the cytoplasm. It carries out the reaction S-adenosyl 3-(methylsulfanyl)propylamine + putrescine = S-methyl-5'-thioadenosine + spermidine + H(+). It functions in the pathway amine and polyamine biosynthesis; spermidine biosynthesis; spermidine from putrescine: step 1/1. Catalyzes the irreversible transfer of a propylamine group from the amino donor S-adenosylmethioninamine (decarboxy-AdoMet) to putrescine (1,4-diaminobutane) to yield spermidine. The chain is Polyamine aminopropyltransferase from Buchnera aphidicola subsp. Schizaphis graminum (strain Sg).